Consider the following 132-residue polypeptide: Phosphoribosyl-AMP cyclohydrolase (132 aa).

D89 contacts Mg(2+). C90 contributes to the Zn(2+) binding site. Residues D91 and D93 each contribute to the Mg(2+) site. C106 and C113 together coordinate Zn(2+).

It belongs to the PRA-CH family. In terms of assembly, homodimer. Requires Mg(2+) as cofactor. The cofactor is Zn(2+).

The protein localises to the cytoplasm. It carries out the reaction 1-(5-phospho-beta-D-ribosyl)-5'-AMP + H2O = 1-(5-phospho-beta-D-ribosyl)-5-[(5-phospho-beta-D-ribosylamino)methylideneamino]imidazole-4-carboxamide. It participates in amino-acid biosynthesis; L-histidine biosynthesis; L-histidine from 5-phospho-alpha-D-ribose 1-diphosphate: step 3/9. Catalyzes the hydrolysis of the adenine ring of phosphoribosyl-AMP. In Renibacterium salmoninarum (strain ATCC 33209 / DSM 20767 / JCM 11484 / NBRC 15589 / NCIMB 2235), this protein is Phosphoribosyl-AMP cyclohydrolase.